Consider the following 139-residue polypeptide: Protein COLD-REGULATED 15A, chloroplastic (139 aa).

A chloroplast-targeting transit peptide spans 1–40; the sequence is MAMSFSGAVLTGMASSFHSGAKQSSFGAVRVGQKTQFVVV.

This sequence belongs to the COR15 protein family. In terms of assembly, forms homooligomers which interact with potential stromal substrates in the stroma of chloroplasts. Interacts with the galactose headgroup of the chloroplast lipid monogalactosyldiacylglycerol (MGDG).

It is found in the plastid. The protein resides in the chloroplast stroma. Exhibits cryoprotective activity toward stromal substrates (e.g. LDH and rubisco) in chloroplasts and in protoplasts and confers freezing tolerance to plants in a CBF-dependent manner. Protectant against various stresses (e.g. cold, drought and heat stress) by preventing protein aggregation (e.g. LDH) and attenuating enzyme inactivation. Influences the intrinsic curvature of the inner membrane of the chloroplast envelope, and modulates the freeze-induced lamellar-to-hexagonal II phase transitions that occur in regions where the plasma membrane is brought into close apposition with the chloroplast envelope during freeze-induced osmotic contraction. Mediates a shift in the melting curves of phospholipids-containing membranes to lower temperatures. Involved in the regulation of leaf senescence by abscisic acid (ABA) in a VNI2-dependent manner. This chain is Protein COLD-REGULATED 15A, chloroplastic, found in Arabidopsis thaliana (Mouse-ear cress).